We begin with the raw amino-acid sequence, 150 residues long: Monooxygenase nsrS (150 aa).

It belongs to the avfA family.

It participates in secondary metabolite biosynthesis. In terms of biological role, monooxygenase; part of the gene cluster that mediates the biosynthesis of the tetrahydroxanthone dimer neosartorin, which exhibits antibacterial activity. The two different monomeric units appear to be synthesized by the same set of enzymes, among which the Baeyer-Villiger monooxygenase nsrF is the key enzyme for the divergence of the biosynthetic routes. The pathway begins with the synthesis of atrochrysone thioester by the polyketide synthase nsrB. The atrochrysone carboxyl ACP thioesterase nsrC then breaks the thioester bond and releases the atrochrysone carboxylic acid from AacuL. Atrochrysone carboxylic acid is decarboxylated by the decarboxylase nsrE, and oxidized by the anthrone oxygenase nsrD to yield emodin. Emodin is then reduced to emodin hydroquinone by the oxidoreductase nsrR. A-ring reduction by the short chain dehydrogenase nsrJ, dehydration by the scytalone dehydratase-like protein nsrI and probable spontaneous re-oxidation, results in overall deoxygenation to chrysophanol. The Baeyer-Villiger monooxygenase nsrF accepts chrysophanol as a substrate to insert one oxygen atom at two different positions to yield the precursors of both monomric units. NsrF is promiscuous/flexible in interacting with the 2 (non methylated and methylated) aromatic rings of chrysophanol, thus diverging the biosynthetic pathway at this point. After the hydrolysis of the lactones, methylesterification by the methyltransferase nsrG yields respectively moniliphenone and 2,2',6'-trihydroxy-4-methyl-6-methoxya-cyldiphenylmethanone. The next steps are the hydroxylation by the FAD-dependent monooxygenase nsrK, followed by isomerization by the monooxygenase nsrQ. The short chain dehydrogenase/reductase nsrO then catalyzes the C-5 ketoreduction to give the xanthone skeleton of blennolide C and 5-acetylblennolide A. The acetyltransferase nsrL has a strict substrate specificity and uses only blennolide A but not blennolide C to yield 5-acetylblennolide A as the single-acetylated product. In the final step of the biosynthesis, the heterodimerization of the 2 xanthones, blennolide C and 5-acetylblennolide A, is catalyzed by the cytochrome P450 monooxygenase nsrP. NsrP can utilize at least three different xanthones as its substrates to perform the dimerization reaction. This chain is Monooxygenase nsrS, found in Aspergillus novofumigatus (strain IBT 16806).